Reading from the N-terminus, the 1216-residue chain is RAB11-binding protein RELCH (1216 aa).

2 disordered regions span residues 1–73 (MAAM…GLPG) and 135–177 (GNFE…QLNR). An N-acetylalanine modification is found at alanine 2. A phosphoserine mark is found at serine 20 and serine 22. Acidic residues predominate over residues 21–31 (DSDEDDDEVAA). Threonine 32 bears the Phosphothreonine mark. 2 positions are modified to phosphoserine: serine 54 and serine 56. Gly residues predominate over residues 148–163 (GAPGVPGAAGVGGAGG). Serine 180 and serine 182 each carry phosphoserine. A Phosphothreonine modification is found at threonine 183. Serine 186 carries the post-translational modification Phosphoserine. Residues 197 to 231 (NRETDEKVAVLEFELRKAKETIQALRANLTKAAEH) adopt a coiled-coil conformation. The LisH domain maps to 255–287 (EKRALNFLVNEFLLKNNYKLTSITFSDENDDQD). A coiled-coil region spans residues 359–397 (VQKLEDKISLLNSEKWSLMEQIRRLKSEMDFLKNEHFAI). The residue at position 385 (serine 385) is a Phosphoserine. The segment at 401 to 477 (CDSVQPPLDQ…SSLSSKKTVH (77 aa)) is disordered. Basic and acidic residues predominate over residues 411–435 (LPHKDSEDSGQHPDVNSSDKGKNTD). The residue at position 453 (serine 453) is a Phosphoserine. The interaction with RAB11A and RAB11B stretch occupies residues 497 to 779 (CRMSADSRLG…SSKAKLHGEV (283 aa)). HEAT repeat units lie at residues 601-639 (LLPQCWEQINHKYPERRLLVAESCGALAPYLPKEIRSSL) and 640-679 (VLSMLQQMLMEDKADLVREAVIKSLGIIMGYIDDPDKYHQ). Serine 792 carries the phosphoserine modification. Residues 1004–1042 (VAPALVTLSSDPEFSVRIATIPAFGTIMETVIQRELLER) form an HEAT 3 repeat. Serine 1149 is subject to Phosphoserine.

It localises to the recycling endosome. The protein resides in the golgi apparatus. The protein localises to the trans-Golgi network. Regulates intracellular cholesterol distribution from recycling endosomes to the trans-Golgi network through interactions with RAB11 and OSBP. Functions in membrane tethering and promotes OSBP-mediated cholesterol transfer between RAB11-bound recycling endosomes and OSBP-bound Golgi-like membranes. The polypeptide is RAB11-binding protein RELCH (Homo sapiens (Human)).